The primary structure comprises 199 residues: Peroxiredoxin-1 (199 aa).

Residue serine 2 is modified to N-acetylserine. Residues 6 to 165 (AKIGHPAPNF…TLRLVQAFQF (160 aa)) form the Thioredoxin domain. Residue lysine 7 is modified to N6-acetyllysine; alternate. Lysine 7 is covalently cross-linked (Glycyl lysine isopeptide (Lys-Gly) (interchain with G-Cter in SUMO2); alternate). N6-acetyllysine is present on residues lysine 16 and lysine 27. The residue at position 32 (serine 32) is a Phosphoserine. At lysine 35 the chain carries N6-acetyllysine; alternate. Lysine 35 carries the post-translational modification N6-succinyllysine; alternate. Cysteine 52 functions as the Cysteine sulfenic acid (-SOH) intermediate in the catalytic mechanism. Position 90 is a phosphothreonine; by CDK1 (threonine 90). Lysine 120 participates in a covalent cross-link: Glycyl lysine isopeptide (Lys-Gly) (interchain with G-Cter in SUMO2). N6-acetyllysine is present on lysine 136. A disordered region spans residues 176 to 199 (GWKPGSDTIKPDVQKSKEYFSKQK). Residues 184–199 (IKPDVQKSKEYFSKQK) are compositionally biased toward basic and acidic residues. Lysine 185 is covalently cross-linked (Glycyl lysine isopeptide (Lys-Gly) (interchain with G-Cter in SUMO1)). Lysine 197 carries the N6-acetyllysine modification.

It belongs to the peroxiredoxin family. AhpC/Prx1 subfamily. In terms of assembly, homodimer; disulfide-linked, upon oxidation. 5 homodimers assemble to form a ring-like decamer. Interacts with GDPD5; forms a mixed-disulfide with GDPD5. Interacts with SESN1 and SESN2. Interacts with FAM107A. In terms of processing, phosphorylated on Thr-90 during the M-phase, which leads to a more than 80% decrease in enzymatic activity. Acetylation increases reducing activity and resistance to superoxidation. Deacetylated by HDAC6 which decreases reducing activity. Post-translationally, the enzyme can be inactivated by further oxidation of the cysteine sulfenic acid (C(P)-SOH) to sulphinic acid (C(P)-SO2H) instead of its condensation to a disulfide bond. It can be reactivated by forming a transient disulfide bond with sulfiredoxin SRXN1, which reduces the cysteine sulfinic acid in an ATP- and Mg-dependent manner.

The protein resides in the cytoplasm. It localises to the melanosome. It catalyses the reaction a hydroperoxide + [thioredoxin]-dithiol = an alcohol + [thioredoxin]-disulfide + H2O. Functionally, thiol-specific peroxidase that catalyzes the reduction of hydrogen peroxide and organic hydroperoxides to water and alcohols, respectively. Plays a role in cell protection against oxidative stress by detoxifying peroxides and as sensor of hydrogen peroxide-mediated signaling events. Might participate in the signaling cascades of growth factors and tumor necrosis factor-alpha by regulating the intracellular concentrations of H(2)O(2). Reduces an intramolecular disulfide bond in GDPD5 that gates the ability to GDPD5 to drive postmitotic motor neuron differentiation. This is Peroxiredoxin-1 (PRDX1) from Homo sapiens (Human).